The following is a 362-amino-acid chain: Lipoprotein p35 (362 aa).

An N-terminal signal peptide occupies residues Met-1–Ser-30. Cys-31 carries the N-palmitoyl cysteine lipid modification. Cys-31 is lipidated: S-diacylglycerol cysteine. Residues Ser-33–Gln-53 form a disordered region.

It belongs to the p35 lipoprotein family. In terms of processing, the N-terminus is blocked.

Its subcellular location is the cell membrane. In terms of biological role, major M.penetrans antigen. This chain is Lipoprotein p35, found in Malacoplasma penetrans (Mycoplasma penetrans).